Consider the following 270-residue polypeptide: MAVKAGQRRPWRSLLQRGVDTAGDLADLVAQKISVAIDPRARLLRRRRRALRWGLVFTAGCLLWGLVTALLAAWGWFTSLLVITGTIAVTQAIPATLLLLRYRWLRSEPLPVRRPASVRRLPPPGSAARPAMSALGASERGFFSLLGVMERGAMLPADEIRDLTAAANQTSAAMVATAAEVVSMERAVQCSAASRSYLVPTINAFTAQLSTGVRQYNEMVTAAAQLVSSANGAGGAGPGQQRYREELAGATDRLVAWAQAFDELGGLPRR.

2 helical membrane-spanning segments follow: residues 50-72 (ALRW…ALLA) and 77-99 (FTSL…TLLL).

Interacts with PspA and Rv2742c.

It is found in the membrane. In terms of biological role, involved in preservation of envelope integrity and tolerance to surface stress. Reverses the inhibitory effect of PspA on ClgR activity. Facilitates intracellular growth of M.tuberculosis. This chain is Putative envelope-preserving system protein Rv2743c, found in Mycobacterium tuberculosis (strain ATCC 25618 / H37Rv).